Consider the following 246-residue polypeptide: MINDINNFIESKKLSLNSRKSYHYDLKQFYKIIGGHVNSEKLALYQQSLSEFKLTARKRKLSAVNQFLFFLYNRGTLKEFYRLQETEKITLAQTKSQIMDLSNFYQDTDYPSGRLIALLILSLGLTPAEIANLKKADFDTTFNILSIEKSQMKRILKLPEDLLPFLLESLEEDGDLVFEHNGKPYSRQWFFNQLTDFLNEKNEQQLTAQLLREQFILKQKENGKTMTELSRLLGLKTPITLERYYR.

A Core-binding (CB) domain is found at 1–72; it reads MINDINNFIE…AVNQFLFFLY (72 aa). In terms of domain architecture, Tyr recombinase spans 84 to 246; that stretch reads QETEKITLAQ…TPITLERYYR (163 aa). Residues lysine 149 and arginine 212 contribute to the active site. The O-(3'-phospho-DNA)-tyrosine intermediate role is filled by tyrosine 244.

Belongs to the 'phage' integrase family. XerD-like subfamily.

It is found in the cytoplasm. Functionally, putative tyrosine recombinase. Not involved in the cutting and rejoining of the recombining DNA molecules on dif(SL) site. This Streptococcus agalactiae serotype V (strain ATCC BAA-611 / 2603 V/R) protein is Tyrosine recombinase XerD-like.